Reading from the N-terminus, the 249-residue chain is Leucyl/phenylalanyl-tRNA--protein transferase (249 aa).

This sequence belongs to the L/F-transferase family.

It localises to the cytoplasm. The catalysed reaction is N-terminal L-lysyl-[protein] + L-leucyl-tRNA(Leu) = N-terminal L-leucyl-L-lysyl-[protein] + tRNA(Leu) + H(+). It carries out the reaction N-terminal L-arginyl-[protein] + L-leucyl-tRNA(Leu) = N-terminal L-leucyl-L-arginyl-[protein] + tRNA(Leu) + H(+). It catalyses the reaction L-phenylalanyl-tRNA(Phe) + an N-terminal L-alpha-aminoacyl-[protein] = an N-terminal L-phenylalanyl-L-alpha-aminoacyl-[protein] + tRNA(Phe). Functionally, functions in the N-end rule pathway of protein degradation where it conjugates Leu, Phe and, less efficiently, Met from aminoacyl-tRNAs to the N-termini of proteins containing an N-terminal arginine or lysine. The sequence is that of Leucyl/phenylalanyl-tRNA--protein transferase from Cupriavidus metallidurans (strain ATCC 43123 / DSM 2839 / NBRC 102507 / CH34) (Ralstonia metallidurans).